The primary structure comprises 146 residues: 3-dehydroquinate dehydratase (146 aa).

Tyr23 (proton acceptor) is an active-site residue. Residues Asn74, His80, and Asp87 each contribute to the substrate site. The active-site Proton donor is His100. Residues 101 to 102 and Arg111 each bind substrate; that span reads IS.

Belongs to the type-II 3-dehydroquinase family. Homododecamer.

It catalyses the reaction 3-dehydroquinate = 3-dehydroshikimate + H2O. Its pathway is metabolic intermediate biosynthesis; chorismate biosynthesis; chorismate from D-erythrose 4-phosphate and phosphoenolpyruvate: step 3/7. In terms of biological role, catalyzes a trans-dehydration via an enolate intermediate. This chain is 3-dehydroquinate dehydratase, found in Bacillus cereus (strain G9842).